The primary structure comprises 41 residues: Photosystem II reaction center protein L (41 aa).

The chain crosses the membrane as a helical span at residues 20–40 (SLYWGLLLIFVLAVPFSNYFF).

It belongs to the PsbL family. In terms of assembly, PSII is composed of 1 copy each of membrane proteins PsbA, PsbB, PsbC, PsbD, PsbE, PsbF, PsbH, PsbI, PsbJ, PsbK, PsbL, PsbM, PsbT, PsbX, PsbY, PsbZ, Psb30/Ycf12, at least 3 peripheral proteins of the oxygen-evolving complex and a large number of cofactors. It forms dimeric complexes.

The protein resides in the plastid. It localises to the chloroplast thylakoid membrane. In terms of biological role, one of the components of the core complex of photosystem II (PSII). PSII is a light-driven water:plastoquinone oxidoreductase that uses light energy to abstract electrons from H(2)O, generating O(2) and a proton gradient subsequently used for ATP formation. It consists of a core antenna complex that captures photons, and an electron transfer chain that converts photonic excitation into a charge separation. This subunit is found at the monomer-monomer interface and is required for correct PSII assembly and/or dimerization. The sequence is that of Photosystem II reaction center protein L from Pinus koraiensis (Korean pine).